Here is a 325-residue protein sequence, read N- to C-terminus: Malate dehydrogenase (325 aa).

NAD(+) is bound at residue 11–17; that stretch reads GAAGQIA. Substrate contacts are provided by arginine 92 and arginine 98. NAD(+) contacts are provided by residues asparagine 105, glutamine 112, and 129–131; that span reads VGN. Residues asparagine 131 and arginine 162 each contribute to the substrate site. Histidine 187 functions as the Proton acceptor in the catalytic mechanism.

This sequence belongs to the LDH/MDH superfamily. MDH type 2 family.

The catalysed reaction is (S)-malate + NAD(+) = oxaloacetate + NADH + H(+). In terms of biological role, catalyzes the reversible oxidation of malate to oxaloacetate. This is Malate dehydrogenase from Methylococcus capsulatus (strain ATCC 33009 / NCIMB 11132 / Bath).